Here is a 200-residue protein sequence, read N- to C-terminus: Putative biotin transporter BioYB (200 aa).

6 helical membrane-spanning segments follow: residues 13–33 (LIGM…VAPF), 36–56 (VAGI…LLLG), 61–81 (AIAM…FAQF), 90–110 (GKSG…GWFL), 121–141 (FLIA…TYMY), and 158–178 (WGFM…LSFI).

This sequence belongs to the BioY family.

It is found in the cell membrane. Putative biotin transporter. The polypeptide is Putative biotin transporter BioYB (bioYB) (Bacillus subtilis (strain 168)).